The chain runs to 558 residues: MESEKILMAAGVTVAAVVGAFVFWGPSGSRLRQRRGQIAGLHNFGLTCFLNTLLQAMAACPQFIAWLQLYNNASPDRKSLITSMLNTLEVVNGTHATLRGDPYSPGAVLRALNALGWVIPQEEHDAHELFHVLLTCLEEEAIRPQPLGCLSDALPTDNDDNSSLAGTATPVGGFRSFSSMAAGLGASQRIGDQPNRPSSAMLTDFLNMEYDESTSLQRLVRSEAHTPDSPASVCERDGNDRLGSVLLDAVSPGTPFGFPLVSNPDSLATPMLGGERSSRPRLPQSQQQQDEGLNRRVSSSCRSLERLHRGPGRVSIWSNMMPSQVAHPFQGAMGAQIVCNGCGSKSAVRYDKFDSITLNLPPQRRTGLSLGHLLSEYITSEDLSDVKCDSCNETTTHTKSVTFAKLPACLCIHVARTVWLPTGQVCKRKDYVHFPESLSMAPYSFVQPHLNSQAGTPWGSTMSLYSSSLPMNNGVGGGEGFGTMFPKNLYRLLAVVVHSGEANSGHFVTYRRGSLRNAHRWYYTSDTIVREVSIDEVLSVPAYLLFYDRGQQRQLNLR.

Residues I6 to P26 traverse the membrane as a helical segment. Residues A39–G550 form the USP domain. C48 (nucleophile) is an active-site residue. The segment at L267–S300 is disordered. Residues P280–Q289 show a composition bias toward low complexity. H506 serves as the catalytic Proton acceptor.

Belongs to the peptidase C19 family.

Its subcellular location is the mitochondrion outer membrane. It carries out the reaction Thiol-dependent hydrolysis of ester, thioester, amide, peptide and isopeptide bonds formed by the C-terminal Gly of ubiquitin (a 76-residue protein attached to proteins as an intracellular targeting signal).. Deubiquitinating enzyme that acts as a key inhibitor of mitophagy by counteracting the action of parkin (park). The protein is Ubiquitin carboxyl-terminal hydrolase 30 homolog of Drosophila melanogaster (Fruit fly).